Reading from the N-terminus, the 436-residue chain is bZIP transcription factor RISBZ1 (436 aa).

The segment at Met1–Ala27 is required for transactivation activity. A disordered region spans residues Leu182–Ala258. Positions Pro215–Ala225 are enriched in acidic residues. The 64-residue stretch at Glu236–Leu299 folds into the bZIP domain. The interval Lys238–Lys257 is basic motif. The segment at Leu264 to Leu278 is leucine-zipper.

Homodimer. Forms heterodimers with RISBZ2/BZP33 and RISBZ3/BZP20. Interacts with DOF3/RPBF. Specifically expressed in seeds. Expressed in aleurone and subaleurone layers of maturing seeds, but not in the embryo tissues.

The protein resides in the nucleus. Functionally, transcriptional activator that binds to the DNA specific sequence 5'-TGAGTCA-3' found in seed storage protein gene promoters. Involved in the endosperm-specific regulation of storage protein genes. Can activate the expression of genes encoding for the seed storage proteins glutelin, prolamin, globulin and the allergen RAG1. Functions synergistically with DOF3/RPBF to positively regulate quantitatively many seed storage protein genes. Functions synergistically with DOF3/RPBF to positively regulate some metabolic enzymes, such as alanine aminotransferase and pyruvate phosphate dikinase, that are expressed in developing seeds. Functions synergistically with DOF3/RPBF to positively regulate genes that are key players in the development of aleurone layers. Functions synergistically with DOF3/RPBF to positively regulate the glutelin GLUD-1 gene in endosperm of developing seeds. Can activate the expression of the bifunctional lysine-degrading enzyme, lysine ketoglutarate reductase/saccharopine dehydrogenase (LKR/SDH), one of the key regulators determining free lysine content in plants. Functions as a key regulator of starch synthesis in seeds, by direct binding to the promoters of starch-synthesizing genes, such as AGPL3, WAXXY and SBE1. The polypeptide is bZIP transcription factor RISBZ1 (Oryza sativa subsp. japonica (Rice)).